The chain runs to 204 residues: CDP-archaeol synthase (204 aa).

Helical transmembrane passes span 5–25, 43–63, 91–111, 116–136, 147–167, and 175–195; these read VYAC…YVIL, MLWV…SRLV, FEGF…LAYA, GVSA…GAFV, PAIL…QGLF, and VVVA…MAAF.

The protein belongs to the CDP-archaeol synthase family. Requires Mg(2+) as cofactor.

The protein localises to the cell membrane. The catalysed reaction is 2,3-bis-O-(geranylgeranyl)-sn-glycerol 1-phosphate + CTP + H(+) = CDP-2,3-bis-O-(geranylgeranyl)-sn-glycerol + diphosphate. The protein operates within membrane lipid metabolism; glycerophospholipid metabolism. Catalyzes the formation of CDP-2,3-bis-(O-geranylgeranyl)-sn-glycerol (CDP-archaeol) from 2,3-bis-(O-geranylgeranyl)-sn-glycerol 1-phosphate (DGGGP) and CTP. This reaction is the third ether-bond-formation step in the biosynthesis of archaeal membrane lipids. The chain is CDP-archaeol synthase from Thermofilum pendens (strain DSM 2475 / Hrk 5).